The primary structure comprises 548 residues: Eukaryotic translation initiation factor 3 subunit D (548 aa).

At lysine 53 the chain carries N6-acetyllysine. The residue at position 161 (serine 161) is a Phosphoserine. The segment at 285–299 (DFDLLTVSETANEPP) is RNA gate. The disordered stretch occupies residues 523 to 548 (PDGTFSSDEDDEEEEEEEEEEEEEEA). Serine 528 and serine 529 each carry phosphoserine. The segment covering 529–548 (SDEDDEEEEEEEEEEEEEEA) has biased composition (acidic residues).

The protein belongs to the eIF-3 subunit D family. In terms of assembly, component of the eukaryotic translation initiation factor 3 (eIF-3) complex, which is composed of 13 subunits: EIF3A, EIF3B, EIF3C, EIF3D, EIF3E, EIF3F, EIF3G, EIF3H, EIF3I, EIF3J, EIF3K, EIF3L and EIF3M. The eIF-3 complex appears to include 3 stable modules: module A is composed of EIF3A, EIF3B, EIF3G and EIF3I; module B is composed of EIF3F, EIF3H, and EIF3M; and module C is composed of EIF3C, EIF3D, EIF3E, EIF3K and EIF3L. EIF3C of module C binds EIF3B of module A and EIF3H of module B, thereby linking the three modules. EIF3J is a labile subunit that binds to the eIF-3 complex via EIF3B. The eIF-3 complex interacts with RPS6KB1 under conditions of nutrient depletion. Mitogenic stimulation leads to binding and activation of a complex composed of MTOR and RPTOR, leading to phosphorylation and release of RPS6KB1 and binding of EIF4B to eIF-3.

Its subcellular location is the cytoplasm. Its function is as follows. mRNA cap-binding component of the eukaryotic translation initiation factor 3 (eIF-3) complex, a complex required for several steps in the initiation of protein synthesis of a specialized repertoire of mRNAs. The eIF-3 complex associates with the 40S ribosome and facilitates the recruitment of eIF-1, eIF-1A, eIF-2:GTP:methionyl-tRNAi and eIF-5 to form the 43S pre-initiation complex (43S PIC). The eIF-3 complex stimulates mRNA recruitment to the 43S PIC and scanning of the mRNA for AUG recognition. The eIF-3 complex is also required for disassembly and recycling of post-termination ribosomal complexes and subsequently prevents premature joining of the 40S and 60S ribosomal subunits prior to initiation. The eIF-3 complex specifically targets and initiates translation of a subset of mRNAs involved in cell proliferation, including cell cycling, differentiation and apoptosis, and uses different modes of RNA stem-loop binding to exert either translational activation or repression. In the eIF-3 complex, EIF3D specifically recognizes and binds the 7-methylguanosine cap of a subset of mRNAs. This is Eukaryotic translation initiation factor 3 subunit D from Bos taurus (Bovine).